Reading from the N-terminus, the 438-residue chain is Aspartyl protease 25 (438 aa).

An N-terminal signal peptide occupies residues 1–23 (MAATTTIPLLLLLLAATVAAAAA). One can recognise a Peptidase A1 domain in the interval 79-433 (YVVRAGLGSP…DVANSRVGFA (355 aa)). Residue Asp97 is part of the active site. A disulfide bridge links Cys107 with Cys113. Residues Asn123, Asn193, and Asn282 are each glycosylated (N-linked (GlcNAc...) asparagine). Asp313 is an active-site residue. A disulfide bond links Cys352 and Cys394.

It belongs to the peptidase A1 family.

In terms of biological role, anther-specific aspartic protease involved in tapetal programmed cell death (PCD). Directly regulated by the transcription factor EAT1/DTD in anthers during tapetum PCD and degeneration. This Oryza sativa subsp. japonica (Rice) protein is Aspartyl protease 25.